Reading from the N-terminus, the 65-residue chain is MKTSVLLFMLGLTFLFDGLAAINLQEGERTCYDIGELCSSDKPCCSGYYCSPRWGWCIYSTRGGR.

The first 21 residues, 1 to 21 (MKTSVLLFMLGLTFLFDGLAA), serve as a signal peptide directing secretion. Positions 22 to 29 (INLQEGER) are excised as a propeptide. Cystine bridges form between cysteine 31-cysteine 45, cysteine 38-cysteine 50, and cysteine 44-cysteine 57.

This sequence belongs to the neurotoxin 10 (Hwtx-1) family. 31 (Jztx-15) subfamily. Expressed by the venom gland.

Its subcellular location is the secreted. In terms of biological role, probable ion channel inhibitor. This chain is U12-theraphotoxin-Cg1a, found in Chilobrachys guangxiensis (Chinese earth tiger tarantula).